The sequence spans 403 residues: PP2A regulatory subunit TAP46 (403 aa).

Disordered stretches follow at residues 158–184 (ERRGRSTKAAALSSPVETEEDDVLDDD) and 351–403 (ANSS…TPCG). 2 stretches are compositionally biased toward acidic residues: residues 174–184 (ETEEDDVLDDD) and 366–375 (EDDEEDDDDA). Residues 376–391 (AQDKARAWDDWKDDNP) show a composition bias toward basic and acidic residues.

Belongs to the IGBP1/TAP42 family. In terms of assembly, interacts with NPP4 and NPP5, two catalytic subunits (subunit C) of PP2A.

It is found in the cytoplasm. The protein resides in the nucleus. Involved in the regulation of the TOR signaling pathway. Seems to act as a regulator of PP2A catalytic activity. This is PP2A regulatory subunit TAP46 from Nicotiana benthamiana.